Consider the following 183-residue polypeptide: Putative manganese efflux pump MntP (183 aa).

Transmembrane regions (helical) follow at residues 8–28 (MIALSLMALALGMDAFSVALG), 39–59 (IFYIGLTIGLFHIFMPLVGMA), 68–88 (FGSIATYAGGVLLLWLGGQMI), 108–128 (LFFAFSVSLDSFSVGLSLGIF), 133–153 (MATILLFGLFSTVLTWIGLLV), and 162–182 (GSYSEALGGSILLVFGLKLLF).

The protein belongs to the MntP (TC 9.B.29) family.

The protein localises to the cell membrane. Functionally, probably functions as a manganese efflux pump. In Geobacillus thermodenitrificans (strain NG80-2), this protein is Putative manganese efflux pump MntP.